Here is a 503-residue protein sequence, read N- to C-terminus: Aminoaldehyde dehydrogenase 1, peroxisomal (503 aa).

Na(+)-binding residues include isoleucine 28, aspartate 99, and leucine 189. 238–245 (GSTMTGSK) contributes to the NAD(+) binding site. The Proton acceptor role is filled by glutamate 260. The NAD(+) site is built by cysteine 294 and glutamate 393. Catalysis depends on cysteine 294, which acts as the Nucleophile.

Belongs to the aldehyde dehydrogenase family. In terms of tissue distribution, expressed in leaves, flowers and fruits.

It is found in the cytoplasm. The protein resides in the cytosol. The enzyme catalyses 4-aminobutanal + NAD(+) + H2O = 4-aminobutanoate + NADH + 2 H(+). It catalyses the reaction 3-aminopropanal + NAD(+) + H2O = beta-alanine + NADH + 2 H(+). It participates in amine and polyamine biosynthesis; betaine biosynthesis via choline pathway; betaine from betaine aldehyde: step 1/1. Functionally, dehydrogenase that catalyzes the oxidation of several aminoaldehydes. Metabolizes and detoxifies aldehyde products of polyamine degradation to non-toxic amino acids. Catalyzes the oxidation of 4-aminobutanal and 3-aminopropanal to 4-aminobutanoate and beta-alanine, respectively. This chain is Aminoaldehyde dehydrogenase 1, peroxisomal, found in Malus domestica (Apple).